The sequence spans 491 residues: Meiosis-specific nuclear structural protein 1 (491 aa).

The interval 1–314 (MATKKRALSF…QLEETLRQRD (314 aa)) is interaction with BBOF1. Coiled-coil stretches lie at residues 29–253 (QVMN…RAQD) and 287–410 (RVHE…AVEK). Tyr188 carries the post-translational modification Phosphotyrosine.

This sequence belongs to the MNS1 family. As to quaternary structure, able to form oligomers. Microtubule inner protein component of sperm flagellar doublet microtubules. Interacts with ODAD1. Interacts with BBOF1. In terms of tissue distribution, high expression in testis. Expressed in pachytene spermatocytes and post-meiotic spermatids.

The protein localises to the nucleus. It is found in the cytoplasm. Its subcellular location is the cytoskeleton. The protein resides in the flagellum axoneme. It localises to the cilium axoneme. Its function is as follows. Microtubule inner protein (MIP) part of the dynein-decorated doublet microtubules (DMTs) in cilia axoneme, which is required for motile cilia beating. May play a role in the control of meiotic division and germ cell differentiation through regulation of pairing and recombination during meiosis. Required for sperm flagella assembly. May play a role in the assembly and function of the outer dynein arm-docking complex (ODA-DC). ODA-DC mediates outer dynein arms (ODA) binding onto the axonemal doublet microtubules. The polypeptide is Meiosis-specific nuclear structural protein 1 (Mns1) (Mus musculus (Mouse)).